The chain runs to 1419 residues: DNA-directed RNA polymerase subunit beta' (1419 aa).

Residues Cys71, Cys73, Cys86, and Cys89 each coordinate Zn(2+). Residues Asp461, Asp463, and Asp465 each coordinate Mg(2+). Residues Cys815, Cys889, Cys896, and Cys899 each contribute to the Zn(2+) site.

This sequence belongs to the RNA polymerase beta' chain family. In terms of assembly, the RNAP catalytic core consists of 2 alpha, 1 beta, 1 beta' and 1 omega subunit. When a sigma factor is associated with the core the holoenzyme is formed, which can initiate transcription. It depends on Mg(2+) as a cofactor. The cofactor is Zn(2+).

It catalyses the reaction RNA(n) + a ribonucleoside 5'-triphosphate = RNA(n+1) + diphosphate. In terms of biological role, DNA-dependent RNA polymerase catalyzes the transcription of DNA into RNA using the four ribonucleoside triphosphates as substrates. In Actinobacillus succinogenes (strain ATCC 55618 / DSM 22257 / CCUG 43843 / 130Z), this protein is DNA-directed RNA polymerase subunit beta'.